Reading from the N-terminus, the 108-residue chain is Large ribosomal subunit protein uL24 (108 aa).

This sequence belongs to the universal ribosomal protein uL24 family. In terms of assembly, part of the 50S ribosomal subunit.

Its function is as follows. One of two assembly initiator proteins, it binds directly to the 5'-end of the 23S rRNA, where it nucleates assembly of the 50S subunit. Functionally, one of the proteins that surrounds the polypeptide exit tunnel on the outside of the subunit. This is Large ribosomal subunit protein uL24 from Desulfosudis oleivorans (strain DSM 6200 / JCM 39069 / Hxd3) (Desulfococcus oleovorans).